A 102-amino-acid chain; its full sequence is Large ribosomal subunit protein uL24 (102 aa).

This sequence belongs to the universal ribosomal protein uL24 family. Part of the 50S ribosomal subunit.

One of two assembly initiator proteins, it binds directly to the 5'-end of the 23S rRNA, where it nucleates assembly of the 50S subunit. Its function is as follows. One of the proteins that surrounds the polypeptide exit tunnel on the outside of the subunit. This Limosilactobacillus fermentum (strain NBRC 3956 / LMG 18251) (Lactobacillus fermentum) protein is Large ribosomal subunit protein uL24.